A 148-amino-acid chain; its full sequence is Transcriptional regulator MraZ (148 aa).

SpoVT-AbrB domains follow at residues 5–51 and 80–123; these read VSIL…PEPN and AETL…NAEE.

The protein belongs to the MraZ family. As to quaternary structure, forms oligomers.

It localises to the cytoplasm. It is found in the nucleoid. This is Transcriptional regulator MraZ from Chromobacterium violaceum (strain ATCC 12472 / DSM 30191 / JCM 1249 / CCUG 213 / NBRC 12614 / NCIMB 9131 / NCTC 9757 / MK).